Reading from the N-terminus, the 134-residue chain is Prolactin (134 aa).

A disulfide bridge connects residues cysteine 126 and cysteine 134.

Belongs to the somatotropin/prolactin family.

The protein localises to the secreted. The chain is Prolactin from Bufo japonicus (Japanese common toad).